The sequence spans 435 residues: Elongation factor 1-alpha (435 aa).

The 226-residue stretch at 4-229 (KPHLNLIVIG…DQLEIPPKPV (226 aa)) folds into the tr-type G domain. A G1 region spans residues 13-20 (GHVDHGKS). Residue 13–20 (GHVDHGKS) participates in GTP binding. Serine 20 is a binding site for Mg(2+). The interval 69–73 (GVTIN) is G2. Positions 90–93 (DAPG) are G3. GTP contacts are provided by residues 90-94 (DAPGH) and 152-155 (NKMD). The interval 152-155 (NKMD) is G4. The segment at 193-195 (VAP) is G5.

The protein belongs to the TRAFAC class translation factor GTPase superfamily. Classic translation factor GTPase family. EF-Tu/EF-1A subfamily.

Its subcellular location is the cytoplasm. It carries out the reaction GTP + H2O = GDP + phosphate + H(+). Functionally, GTP hydrolase that promotes the GTP-dependent binding of aminoacyl-tRNA to the A-site of ribosomes during protein biosynthesis. This Sulfurisphaera tokodaii (strain DSM 16993 / JCM 10545 / NBRC 100140 / 7) (Sulfolobus tokodaii) protein is Elongation factor 1-alpha.